Consider the following 199-residue polypeptide: Prolactin-2 (199 aa).

3 disulfide bridges follow: C4/C11, C58/C174, and C191/C199.

This sequence belongs to the somatotropin/prolactin family.

The protein resides in the secreted. The polypeptide is Prolactin-2 (Alligator mississippiensis (American alligator)).